Here is a 183-residue protein sequence, read N- to C-terminus: ATP-dependent protease subunit HslV (183 aa).

Residue Thr-13 is part of the active site. Gly-168, Cys-171, and Thr-174 together coordinate Na(+).

Belongs to the peptidase T1B family. HslV subfamily. As to quaternary structure, a double ring-shaped homohexamer of HslV is capped on each side by a ring-shaped HslU homohexamer. The assembly of the HslU/HslV complex is dependent on binding of ATP.

The protein resides in the cytoplasm. The enzyme catalyses ATP-dependent cleavage of peptide bonds with broad specificity.. With respect to regulation, allosterically activated by HslU binding. Functionally, protease subunit of a proteasome-like degradation complex believed to be a general protein degrading machinery. This chain is ATP-dependent protease subunit HslV, found in Xylella fastidiosa (strain M23).